The primary structure comprises 61 residues: Sec-independent protein translocase protein TatA (61 aa).

The helical transmembrane segment at 1 to 21 (MFGIGMPEMLIILVIILIIFG) threads the bilayer.

This sequence belongs to the TatA/E family. In terms of assembly, the Tat system comprises two distinct complexes: a TatABC complex, containing multiple copies of TatA, TatB and TatC subunits, and a separate TatA complex, containing only TatA subunits. Substrates initially bind to the TatABC complex, which probably triggers association of the separate TatA complex to form the active translocon.

The protein localises to the cell inner membrane. Its function is as follows. Part of the twin-arginine translocation (Tat) system that transports large folded proteins containing a characteristic twin-arginine motif in their signal peptide across membranes. TatA could form the protein-conducting channel of the Tat system. In Syntrophus aciditrophicus (strain SB), this protein is Sec-independent protein translocase protein TatA.